Here is a 219-residue protein sequence, read N- to C-terminus: Translation initiation factor IF-3 (219 aa).

The protein belongs to the IF-3 family. As to quaternary structure, monomer.

The protein resides in the cytoplasm. IF-3 binds to the 30S ribosomal subunit and shifts the equilibrium between 70S ribosomes and their 50S and 30S subunits in favor of the free subunits, thus enhancing the availability of 30S subunits on which protein synthesis initiation begins. This is Translation initiation factor IF-3 from Prochlorococcus marinus (strain MIT 9303).